The chain runs to 110 residues: UPF0122 protein lmo1802 (110 aa).

The protein belongs to the UPF0122 family.

Functionally, might take part in the signal recognition particle (SRP) pathway. This is inferred from the conservation of its genetic proximity to ftsY/ffh. May be a regulatory protein. This Listeria monocytogenes serovar 1/2a (strain ATCC BAA-679 / EGD-e) protein is UPF0122 protein lmo1802.